A 62-amino-acid chain; its full sequence is Large ribosomal subunit protein bL32 (62 aa).

Belongs to the bacterial ribosomal protein bL32 family.

The protein is Large ribosomal subunit protein bL32 of Levilactobacillus brevis (strain ATCC 367 / BCRC 12310 / CIP 105137 / JCM 1170 / LMG 11437 / NCIMB 947 / NCTC 947) (Lactobacillus brevis).